The chain runs to 636 residues: Threonine--tRNA ligase (636 aa).

The TGS domain occupies 1 to 61; that stretch reads MLKITLKDGS…NENCEVEILS (61 aa). Residues 244–534 are catalytic; sequence EHRKLGKELD…LIEHYEGKFP (291 aa). Zn(2+)-binding residues include C335, H386, and H511.

Belongs to the class-II aminoacyl-tRNA synthetase family. As to quaternary structure, homodimer. Zn(2+) is required as a cofactor.

It is found in the cytoplasm. The catalysed reaction is tRNA(Thr) + L-threonine + ATP = L-threonyl-tRNA(Thr) + AMP + diphosphate + H(+). Catalyzes the attachment of threonine to tRNA(Thr) in a two-step reaction: L-threonine is first activated by ATP to form Thr-AMP and then transferred to the acceptor end of tRNA(Thr). Also edits incorrectly charged L-seryl-tRNA(Thr). This chain is Threonine--tRNA ligase, found in Natranaerobius thermophilus (strain ATCC BAA-1301 / DSM 18059 / JW/NM-WN-LF).